Here is an 88-residue protein sequence, read N- to C-terminus: Small ribosomal subunit protein uS17 (88 aa).

This sequence belongs to the universal ribosomal protein uS17 family. In terms of assembly, part of the 30S ribosomal subunit.

Functionally, one of the primary rRNA binding proteins, it binds specifically to the 5'-end of 16S ribosomal RNA. This chain is Small ribosomal subunit protein uS17, found in Ectopseudomonas mendocina (strain ymp) (Pseudomonas mendocina).